Here is a 252-residue protein sequence, read N- to C-terminus: Thiamine thiazole synthase (252 aa).

Residues serine 35, 54 to 55, glycine 62, valine 126, and 152 to 154 each bind NAD(+); these read EK and HVD. Residues aspartate 154 and histidine 169 each contribute to the Fe cation site. An NAD(+)-binding site is contributed by methionine 217. Arginine 227 provides a ligand contact to glycine.

Belongs to the THI4 family. As to quaternary structure, homooctamer; tetramer of dimers. Fe(2+) serves as cofactor.

The enzyme catalyses hydrogen sulfide + glycine + NAD(+) = ADP-5-ethyl-4-methylthiazole-2-carboxylate + nicotinamide + 3 H2O + H(+). Its pathway is cofactor biosynthesis; thiamine diphosphate biosynthesis. Involved in the biosynthesis of the thiazole moiety of thiamine. Catalyzes the conversion of NAD and glycine to adenosine diphosphate 5-(2-hydroxyethyl)-4-methylthiazole-2-carboxylate (ADT), an adenylated thiazole intermediate, using free sulfide as a source of sulfur. The sequence is that of Thiamine thiazole synthase from Pyrococcus abyssi (strain GE5 / Orsay).